The primary structure comprises 1267 residues: MGTYRKRFNEKARSGHMAKLKELKRIRNKQFTRQDENDERVENPDSAPAESSTTEPNANAEILEPLTEEEKKMKKRKLQELFTPKESKVSRLKKKRLDKFIEHQLKREERKTIIGKLQDYKIDTSLLTSSKRLGEGRQTKKEEFKEALSLERQGRGNEQTNEILYEEYEPKVWDEYGEGGSSEDDDGEDDFEASFGSMPKPTDNEEKKSSGFIDHRPAKFGGSGLSFGFSNIKVINKESKTPKKKYNWRQRVEMEELKKHGKEDEMDFDTTSEDDDEEEDQEEEDKMHPSENPLEEVESADSETGSEKFDQNDVANEFKDWANQEIKKLEGRDQELVTPTLNIDYKPIIRKEDLDDGLQEAYVPINENSTRKAFYVEVSRSDEIQKARIQLPVFGEEHKIMEAIHHNDVVIICGETGSGKTTQVPQFLYEAGFGAEDSPDYPGMVGITQPRRVAAVSMAERVANELGDHGHKVGYQIRFDSTAKEDTKVKFMTDGVLLREMMHDFKLTKYSSIIIDEAHERNINTDILIGMLSRCVRLRAKLHKENPIEHKKLKLIIMSATLRVSDFSENKTLFPIAPPVLQVDARQFPVSIHFNRRTAFNYTDEAFRKTCKIHQKLPPGAILVFLTGQQEITHMVKRLRKEFPFKKNSKYNKDLETPVSKMGINSKTTDLEAEDIDFSVQVIDQDKFKSAIRYEEDEGNSGNGEDEEDEEEEGFEEVLTEGQTANDPLYVLPLYSLLPTKEQMRVFQKPPQGSRLCIVATNVAETSLTIPGVRYVVDSGRSKERKYNESNGVQSFEVGWVSKASANQRSGRAGRTGPGHCYRLYSSAVFEHDFEQFSKPEILRMPVESIVLQMKSMAIHNIINFPFPTPPDRVALSKAIQLLQYLGALDNKEMITEDGKKMSLFPLSPRFSKMLLVSDEKACLPYIVAIVSALSVGDPFINEFELGINEISRKPNPDENLDDKIREHDESTPGMDPELKKELRSKFYKSRSQFSKLDKFSDVFRLLSVVSAMDYVPKEQKEIFMKKNFLRGKLMEEIVKLRKQLMYIIKSNTSKENIAVVIRNEDLKSDIPSVIQIKLLKQMICAGFVDHVAVRADVLFPDDAKITNRTSIINIPYIPVLATRTPNIEDCFVYIHPTSILNNLGEMPPKYMLYYSLHLGGNNKTRMNTLCDIASTPLANIARKGLLLTYSKPLTGQGLKTVNLSPTERYCYVVPRFGSTVDNDLKIGWDLNPIAVHQKKQKGQWTVIKFITRKGFQTITGEEKEKK.

Disordered stretches follow at residues 1-67 (MGTY…EPLT), 168-233 (YEPK…SNIK), and 255-313 (EELK…DQND). 2 stretches are compositionally biased toward basic and acidic residues: residues 7–25 (RFNE…ELKR) and 32–43 (TRQDENDERVEN). Acidic residues predominate over residues 175-192 (EYGEGGSSEDDDGEDDFE). At S181 the chain carries Phosphoserine. Basic and acidic residues predominate over residues 202-217 (TDNEEKKSSGFIDHRP). Residues 264–284 (DEMDFDTTSEDDDEEEDQEEE) are compositionally biased toward acidic residues. Positions 401–580 (MEAIHHNDVV…KTLFPIAPPV (180 aa)) constitute a Helicase ATP-binding domain. 414–421 (GETGSGKT) is a binding site for ATP. Positions 516–519 (DEAH) match the DEAH box motif. The region spanning 675–858 (DIDFSVQVID…SIVLQMKSMA (184 aa)) is the Helicase C-terminal domain. Disordered stretches follow at residues 693–720 (RYEE…EVLT) and 955–976 (PNPD…PGMD). Residues 695 to 719 (EEDEGNSGNGEDEEDEEEEGFEEVL) show a composition bias toward acidic residues.

This sequence belongs to the DEAD box helicase family. DEAH subfamily. In terms of assembly, interacts with snoRNA U3. Component of the ribosomal small subunit (SSU) processome composed of at least 40 protein subunits and snoRNA U3.

Its subcellular location is the nucleus. It is found in the nucleolus. It carries out the reaction ATP + H2O = ADP + phosphate + H(+). Functionally, probable ATP-binding RNA helicase. Required for 18S rRNA synthesis. May play a role in restructuring of the pre-rRNA. This chain is Probable ATP-dependent RNA helicase DHR1 (ECM16), found in Saccharomyces cerevisiae (strain ATCC 204508 / S288c) (Baker's yeast).